Here is an 809-residue protein sequence, read N- to C-terminus: Cyclic nucleotide-gated channel beta-3 (809 aa).

2 disordered regions span residues 1 to 121 (MFKS…PPAA) and 153 to 178 (GDLS…ESDD). At 1-218 (MFKSLTKVNK…SIDSYTDRLY (218 aa)) the chain is on the cytoplasmic side. Residues 22–31 (QSSRRNEEGS) are compositionally biased toward basic and acidic residues. The span at 32–43 (HPSNQSQQTTAQ) shows a compositional bias: polar residues. Residues 44 to 53 (EENKGEEKSL) are compositionally biased toward basic and acidic residues. Over residues 55 to 88 (TKSTPVTSEEPHTNIQDKLSKKNSSGDLTTNPDP) the composition is skewed to polar residues. A helical transmembrane segment spans residues 219–242 (LLWLLLVTLAYNWNCCFIPLRLVF). The Extracellular segment spans residues 243 to 249 (PYQTADN). A helical membrane pass occupies residues 250–270 (IHYWLIADIICDIIYLYDMLF). Over 271 to 299 (IQPRLQFVRGGDIIVDSNELRKHYRTSTK) the chain is Cytoplasmic. The helical transmembrane segment at 300–317 (FQLDVASIIPFDICYLFF) threads the bilayer. Residues 318–320 (GFN) are Extracellular-facing. A helical membrane pass occupies residues 321–335 (PMFRANRMLKYTSFF). The Cytoplasmic segment spans residues 336–348 (EFNHHLESIMDKA). The tract at residues 348–447 (AYIYRVIRTT…IGQMRDVIGA (100 aa)) is ion conduction pathway. A helical transmembrane segment spans residues 349 to 371 (YIYRVIRTTGYLLFILHINACVY). The Extracellular portion of the chain corresponds to 372–393 (YWASNYEGIGTTRWVYDGEGNE). A run of 2 helical transmembrane segments spans residues 394–420 (YLRC…LFEI) and 421–445 (VFQL…RDVI). The segment at 407–410 (TIGG) is selectivity filter. Over 446–809 (GAATANQNYF…TIEVKEKAKQ (364 aa)) the chain is Cytoplasmic. The interval 450–526 (ANQNYFRACM…SIISKVDLFK (77 aa)) is C-linker. Positions 530–646 (TQMIYDMLLR…ILMKKARVLL (117 aa)) are cyclic nucleotide-binding domain. Positions 591, 592, 604, and 605 each coordinate 3',5'-cyclic GMP. The interval 698–776 (QAAQKKENSE…PHSVRRTVLP (79 aa)) is disordered. Residues 716–755 (NEDKQKENEDKQKENEDKGKENEDKDKGREPEEKPLDRPE) show a composition bias toward basic and acidic residues.

Belongs to the cyclic nucleotide-gated cation channel (TC 1.A.1.5) family. CNGB3 subfamily. Forms heterotetrameric channels composed of CNGA3 and CNGB3 subunits with 3:1 stoichiometry. As to expression, expressed specifically in the retina.

It localises to the cell membrane. It catalyses the reaction Ca(2+)(in) = Ca(2+)(out). The enzyme catalyses Na(+)(in) = Na(+)(out). The catalysed reaction is K(+)(in) = K(+)(out). It carries out the reaction NH4(+)(in) = NH4(+)(out). It catalyses the reaction Rb(+)(in) = Rb(+)(out). The enzyme catalyses Li(+)(in) = Li(+)(out). The catalysed reaction is Cs(+)(in) = Cs(+)(out). In terms of biological role, pore-forming subunit of the cone cyclic nucleotide-gated channel. Mediates cone photoresponses at bright light converting transient changes in intracellular cGMP levels into electrical signals. In the dark, cGMP levels are high and keep the channel open enabling a steady inward current carried by Na(+) and Ca(2+) ions that leads to membrane depolarization and neurotransmitter release from synaptic terminals. Upon photon absorption cGMP levels decline leading to channel closure and membrane hyperpolarization that ultimately slows neurotransmitter release and signals the presence of light, the end point of the phototransduction cascade. Conducts cGMP- and cAMP-gated ion currents, with permeability for monovalent and divalent cations. The chain is Cyclic nucleotide-gated channel beta-3 from Homo sapiens (Human).